A 480-amino-acid polypeptide reads, in one-letter code: Uridine/deoxyuridine transporter (480 aa).

14 consecutive transmembrane segments (helical) span residues 14–34 (VGSI…FQLN), 55–75 (SIAL…LFLP), 93–113 (LTMI…LMIG), 115–135 (ILQG…HVKV), 147–167 (ILTS…GWLV), 174–194 (SVFF…SFGT), 207–227 (WTGV…VNAL), 239–259 (WLLA…FWQV), 280–300 (GLLI…NGII), 320–340 (LVTL…SGFL), 358–378 (IIGI…LLLL), 382–402 (FIGI…GIVL), 417–437 (GMFN…PTVL), and 449–469 (ISGI…SFLI).

Belongs to the major facilitator superfamily. EmrB family.

The protein resides in the cell membrane. Responsible for the uptake of uridine and deoxyuridine. Not involved in purine nucleoside uptake. This chain is Uridine/deoxyuridine transporter, found in Lactococcus lactis subsp. cremoris (strain MG1363).